A 450-amino-acid chain; its full sequence is Chromosomal replication initiator protein DnaA (450 aa).

Residues 1 to 84 (MTENEQIFWN…AVDYVYEEDL (84 aa)) form a domain I, interacts with DnaA modulators region. The segment at 84-109 (LIIEQQHQGQQGYTEQAFQQLPAVQS) is domain II. Residues 110-328 (DLNPKYSFDN…GALKDISLVA (219 aa)) form a domain III, AAA+ region region. The ATP site is built by Gly154, Gly156, Lys157, and Thr158. A domain IV, binds dsDNA region spans residues 329-450 (NFKQIDTITV…EIETIKNKIK (122 aa)).

Belongs to the DnaA family. Oligomerizes as a right-handed, spiral filament on DNA at oriC.

Its subcellular location is the cytoplasm. Its function is as follows. Plays an essential role in the initiation and regulation of chromosomal replication. ATP-DnaA binds to the origin of replication (oriC) to initiate formation of the DNA replication initiation complex once per cell cycle. Binds the DnaA box (a 9 base pair repeat at the origin) and separates the double-stranded (ds)DNA. Forms a right-handed helical filament on oriC DNA; dsDNA binds to the exterior of the filament while single-stranded (ss)DNA is stabiized in the filament's interior. The ATP-DnaA-oriC complex binds and stabilizes one strand of the AT-rich DNA unwinding element (DUE), permitting loading of DNA polymerase. After initiation quickly degrades to an ADP-DnaA complex that is not apt for DNA replication. Binds acidic phospholipids. This Streptococcus equi subsp. zooepidemicus (strain MGCS10565) protein is Chromosomal replication initiator protein DnaA.